The sequence spans 323 residues: Acetyl-coenzyme A carboxylase carboxyl transferase subunit alpha (323 aa).

The region spanning 36 to 293 (ELELLSAKAQ…KEEVVKNLQI (258 aa)) is the CoA carboxyltransferase C-terminal domain.

Belongs to the AccA family. Acetyl-CoA carboxylase is a heterohexamer composed of biotin carboxyl carrier protein (AccB), biotin carboxylase (AccC) and two subunits each of ACCase subunit alpha (AccA) and ACCase subunit beta (AccD).

The protein localises to the cytoplasm. It catalyses the reaction N(6)-carboxybiotinyl-L-lysyl-[protein] + acetyl-CoA = N(6)-biotinyl-L-lysyl-[protein] + malonyl-CoA. Its pathway is lipid metabolism; malonyl-CoA biosynthesis; malonyl-CoA from acetyl-CoA: step 1/1. Component of the acetyl coenzyme A carboxylase (ACC) complex. First, biotin carboxylase catalyzes the carboxylation of biotin on its carrier protein (BCCP) and then the CO(2) group is transferred by the carboxyltransferase to acetyl-CoA to form malonyl-CoA. The sequence is that of Acetyl-coenzyme A carboxylase carboxyl transferase subunit alpha from Carboxydothermus hydrogenoformans (strain ATCC BAA-161 / DSM 6008 / Z-2901).